A 75-amino-acid chain; its full sequence is Small integral membrane protein 7 (75 aa).

Positions 1–17 are cleaved as a signal peptide; it reads MIGDILLFGTLLMNAGA. Over 18-53 the chain is Extracellular; sequence VLNFKLKKKDTQGFGEESKEPSTGDNIREFLLSLRY. Residues 54–74 traverse the membrane as a helical segment; that stretch reads FRIFIALWNVFMMLCMIVLFG. Ser75 is a topological domain (cytoplasmic).

Belongs to the SMIM7 family.

Its subcellular location is the membrane. This Mus musculus (Mouse) protein is Small integral membrane protein 7 (Smim7).